The sequence spans 198 residues: Large ribosomal subunit protein bL21 (198 aa).

It belongs to the bacterial ribosomal protein bL21 family. Part of the 50S ribosomal subunit. Contacts protein L20.

This protein binds to 23S rRNA in the presence of protein L20. This is Large ribosomal subunit protein bL21 from Ruegeria sp. (strain TM1040) (Silicibacter sp.).